We begin with the raw amino-acid sequence, 264 residues long: 3-methyl-2-oxobutanoate hydroxymethyltransferase (264 aa).

Mg(2+) is bound by residues D45 and D84. Residues 45–46 (DS), D84, and K112 each bind 3-methyl-2-oxobutanoate. E114 serves as a coordination point for Mg(2+). Catalysis depends on E181, which acts as the Proton acceptor.

Belongs to the PanB family. Homodecamer; pentamer of dimers. The cofactor is Mg(2+).

The protein localises to the cytoplasm. It catalyses the reaction 3-methyl-2-oxobutanoate + (6R)-5,10-methylene-5,6,7,8-tetrahydrofolate + H2O = 2-dehydropantoate + (6S)-5,6,7,8-tetrahydrofolate. Its pathway is cofactor biosynthesis; (R)-pantothenate biosynthesis; (R)-pantoate from 3-methyl-2-oxobutanoate: step 1/2. Its function is as follows. Catalyzes the reversible reaction in which hydroxymethyl group from 5,10-methylenetetrahydrofolate is transferred onto alpha-ketoisovalerate to form ketopantoate. This Escherichia coli O7:K1 (strain IAI39 / ExPEC) protein is 3-methyl-2-oxobutanoate hydroxymethyltransferase.